A 126-amino-acid chain; its full sequence is Thiocyanate hydrolase subunit alpha (126 aa).

As to quaternary structure, heterododecamer consisting of 4 alpha, 4 beta, and 4 gamma subunits.

The enzyme catalyses thiocyanate + H2O + 2 H(+) = carbonyl sulfide + NH4(+). The protein operates within organosulfur degradation; thiocyanate degradation. Its function is as follows. Involved in the degradation of thiocyanate. The protein is Thiocyanate hydrolase subunit alpha (scnA) of Thiobacillus thioparus.